The sequence spans 266 residues: Probable septum site-determining protein MinC (266 aa).

Residues 1 to 21 (MSEAESTPVEEPVVESTEGSE) are compositionally biased toward low complexity. Residues 1 to 28 (MSEAESTPVEEPVVESTEGSEAIPEVEQ) form a disordered region.

Belongs to the MinC family. Interacts with MinD and FtsZ.

Cell division inhibitor that blocks the formation of polar Z ring septums. Rapidly oscillates between the poles of the cell to destabilize FtsZ filaments that have formed before they mature into polar Z rings. Prevents FtsZ polymerization. The polypeptide is Probable septum site-determining protein MinC (Thermosynechococcus vestitus (strain NIES-2133 / IAM M-273 / BP-1)).